The chain runs to 447 residues: Serine/threonine-protein phosphatase 2A 55 kDa regulatory subunit B gamma isoform (447 aa).

WD repeat units follow at residues 22–61 (TEAD…KNAP), 87–128 (EIEE…KRPE), 171–209 (GHTY…RSFN), 220–260 (DLTE…LCDK), 279–317 (EIIS…RPIE), 334–375 (ESDC…DVTL), and 410–446 (DFTK…NSDM).

It belongs to the phosphatase 2A regulatory subunit B family. As to quaternary structure, PP2A consists of a common heterodimeric core enzyme, composed of a 36 kDa catalytic subunit (subunit C) and a 65 kDa constant regulatory subunit (PR65 or subunit A), that associates with a variety of regulatory subunits. Proteins that associate with the core dimer include three families of regulatory subunits B (the R2/B/PR55/B55, R3/B''/PR72/PR130/PR59 and R5/B'/B56 families), the 48 kDa variable regulatory subunit, viral proteins, and cell signaling molecules. Interacts with IER5. As to expression, highly expressed in brain.

The B regulatory subunit might modulate substrate selectivity and catalytic activity, and might also direct the localization of the catalytic enzyme to a particular subcellular compartment. The protein is Serine/threonine-protein phosphatase 2A 55 kDa regulatory subunit B gamma isoform (Ppp2r2c) of Rattus norvegicus (Rat).